The chain runs to 305 residues: UDP-N-acetylenolpyruvoylglucosamine reductase (305 aa).

The 180-residue stretch at 35-214 (VGGPAQALFT…RARMNEVQAH (180 aa)) folds into the FAD-binding PCMH-type domain. Residue arginine 179 is part of the active site. Serine 228 acts as the Proton donor in catalysis. Glutamate 298 is an active-site residue.

The protein belongs to the MurB family. FAD is required as a cofactor.

Its subcellular location is the cytoplasm. The catalysed reaction is UDP-N-acetyl-alpha-D-muramate + NADP(+) = UDP-N-acetyl-3-O-(1-carboxyvinyl)-alpha-D-glucosamine + NADPH + H(+). It participates in cell wall biogenesis; peptidoglycan biosynthesis. Its function is as follows. Cell wall formation. The polypeptide is UDP-N-acetylenolpyruvoylglucosamine reductase (Nitrobacter winogradskyi (strain ATCC 25391 / DSM 10237 / CIP 104748 / NCIMB 11846 / Nb-255)).